A 490-amino-acid polypeptide reads, in one-letter code: Cytochrome P450 71B28 (490 aa).

Residues methionine 1–leucine 21 form a helical membrane-spanning segment. Cysteine 440 lines the heme pocket.

This sequence belongs to the cytochrome P450 family. It depends on heme as a cofactor.

The protein localises to the membrane. The polypeptide is Cytochrome P450 71B28 (CYP71B28) (Arabidopsis thaliana (Mouse-ear cress)).